We begin with the raw amino-acid sequence, 332 residues long: Malate dehydrogenase, cytoplasmic (332 aa).

NAD(+)-binding positions include 16 to 17 (QI), Asp-43, and Gly-90. Arg-99 serves as a coordination point for oxaloacetate. 2 residues coordinate NAD(+): Gln-113 and Asn-132. Asn-132, Arg-163, His-188, and Ser-243 together coordinate oxaloacetate. Residue His-188 is the Proton acceptor of the active site.

Belongs to the LDH/MDH superfamily. MDH type 2 family. Homodimer.

It is found in the cytoplasm. It carries out the reaction (S)-malate + NAD(+) = oxaloacetate + NADH + H(+). The polypeptide is Malate dehydrogenase, cytoplasmic (CMDH) (Medicago sativa (Alfalfa)).